A 432-amino-acid polypeptide reads, in one-letter code: Glutamyl-tRNA reductase (432 aa).

Substrate is bound by residues 49-52 (TCNR), Ser-107, 112-114 (ETQ), and Gln-118. The active-site Nucleophile is Cys-50. Position 186–191 (186–191 (GAGEMG)) interacts with NADP(+).

Belongs to the glutamyl-tRNA reductase family. Homodimer.

The catalysed reaction is (S)-4-amino-5-oxopentanoate + tRNA(Glu) + NADP(+) = L-glutamyl-tRNA(Glu) + NADPH + H(+). Its pathway is porphyrin-containing compound metabolism; protoporphyrin-IX biosynthesis; 5-aminolevulinate from L-glutamyl-tRNA(Glu): step 1/2. Catalyzes the NADPH-dependent reduction of glutamyl-tRNA(Glu) to glutamate 1-semialdehyde (GSA). The polypeptide is Glutamyl-tRNA reductase (Campylobacter jejuni subsp. jejuni serotype O:23/36 (strain 81-176)).